The sequence spans 432 residues: Serine--tRNA ligase (432 aa).

L-serine is bound at residue 239–241 (TSE). 270 to 272 (RSE) provides a ligand contact to ATP. E293 serves as a coordination point for L-serine. 357 to 360 (EISS) serves as a coordination point for ATP. S392 contacts L-serine.

This sequence belongs to the class-II aminoacyl-tRNA synthetase family. Type-1 seryl-tRNA synthetase subfamily. In terms of assembly, homodimer. The tRNA molecule binds across the dimer.

It is found in the cytoplasm. It catalyses the reaction tRNA(Ser) + L-serine + ATP = L-seryl-tRNA(Ser) + AMP + diphosphate + H(+). It carries out the reaction tRNA(Sec) + L-serine + ATP = L-seryl-tRNA(Sec) + AMP + diphosphate + H(+). The protein operates within aminoacyl-tRNA biosynthesis; selenocysteinyl-tRNA(Sec) biosynthesis; L-seryl-tRNA(Sec) from L-serine and tRNA(Sec): step 1/1. Functionally, catalyzes the attachment of serine to tRNA(Ser). Is also able to aminoacylate tRNA(Sec) with serine, to form the misacylated tRNA L-seryl-tRNA(Sec), which will be further converted into selenocysteinyl-tRNA(Sec). The chain is Serine--tRNA ligase from Methylibium petroleiphilum (strain ATCC BAA-1232 / LMG 22953 / PM1).